A 600-amino-acid polypeptide reads, in one-letter code: Xylulose kinase (600 aa).

79 to 82 (WLEA) lines the substrate pocket. Position 244 is a phosphoserine (Ser244). Asp299 is a substrate binding site. Residues Gly358 and 505 to 509 (GASKN) contribute to the ATP site.

It belongs to the FGGY kinase family.

It localises to the cytoplasm. It catalyses the reaction D-xylulose + ATP = D-xylulose 5-phosphate + ADP + H(+). Its function is as follows. Xylulose kinase necessary for growth in culture media with D-xylulose as the solecarbon source. This is Xylulose kinase from Saccharomyces cerevisiae (strain ATCC 204508 / S288c) (Baker's yeast).